The following is a 402-amino-acid chain: Glutamyl-tRNA reductase (402 aa).

Substrate-binding positions include 48 to 51, Ser-91, 96 to 98, and Gln-102; these read TCNR and EDQ. Cys-49 serves as the catalytic Nucleophile. 171–176 provides a ligand contact to NADP(+); it reads GAGKMG.

The protein belongs to the glutamyl-tRNA reductase family. In terms of assembly, homodimer.

It carries out the reaction (S)-4-amino-5-oxopentanoate + tRNA(Glu) + NADP(+) = L-glutamyl-tRNA(Glu) + NADPH + H(+). It participates in porphyrin-containing compound metabolism; protoporphyrin-IX biosynthesis; 5-aminolevulinate from L-glutamyl-tRNA(Glu): step 1/2. Its function is as follows. Catalyzes the NADPH-dependent reduction of glutamyl-tRNA(Glu) to glutamate 1-semialdehyde (GSA). In Methanothermobacter thermautotrophicus (strain ATCC 29096 / DSM 1053 / JCM 10044 / NBRC 100330 / Delta H) (Methanobacterium thermoautotrophicum), this protein is Glutamyl-tRNA reductase.